A 323-amino-acid polypeptide reads, in one-letter code: tRNA dimethylallyltransferase (323 aa).

ATP is bound at residue 12-19 (GPTAAGKT). Residue 14-19 (TAAGKT) participates in substrate binding. Interaction with substrate tRNA regions lie at residues 37–40 (DSAL) and 161–165 (QRLIR).

This sequence belongs to the IPP transferase family. As to quaternary structure, monomer. Mg(2+) serves as cofactor.

The enzyme catalyses adenosine(37) in tRNA + dimethylallyl diphosphate = N(6)-dimethylallyladenosine(37) in tRNA + diphosphate. Functionally, catalyzes the transfer of a dimethylallyl group onto the adenine at position 37 in tRNAs that read codons beginning with uridine, leading to the formation of N6-(dimethylallyl)adenosine (i(6)A). The sequence is that of tRNA dimethylallyltransferase from Pseudomonas entomophila (strain L48).